A 169-amino-acid polypeptide reads, in one-letter code: Phosphopantetheine adenylyltransferase (169 aa).

Serine 10 is a substrate binding site. ATP contacts are provided by residues 10–11 (SF) and histidine 18. 3 residues coordinate substrate: lysine 42, threonine 79, and arginine 93. ATP-binding positions include 94–96 (GLR), glutamate 104, and 129–135 (VRPITAT).

The protein belongs to the bacterial CoaD family. In terms of assembly, homohexamer. Mg(2+) is required as a cofactor.

It localises to the cytoplasm. It carries out the reaction (R)-4'-phosphopantetheine + ATP + H(+) = 3'-dephospho-CoA + diphosphate. The protein operates within cofactor biosynthesis; coenzyme A biosynthesis; CoA from (R)-pantothenate: step 4/5. Its function is as follows. Reversibly transfers an adenylyl group from ATP to 4'-phosphopantetheine, yielding dephospho-CoA (dPCoA) and pyrophosphate. The chain is Phosphopantetheine adenylyltransferase from Rhodopseudomonas palustris (strain ATCC BAA-98 / CGA009).